The primary structure comprises 137 residues: MAHRSHTGTGPSQRQLRVGELIRRTLADVLNRGEIHDPELNRLSITVGEVRCSPDLKVATVHVMPLGGKDVEEAIALLSKHRGELRHHITRQMTLKYAPDLRFRPDETFDRLDETRRLFSDETVMRDIRGGGEADED.

The protein belongs to the RbfA family. As to quaternary structure, monomer. Binds 30S ribosomal subunits, but not 50S ribosomal subunits or 70S ribosomes.

It localises to the cytoplasm. Its function is as follows. One of several proteins that assist in the late maturation steps of the functional core of the 30S ribosomal subunit. Associates with free 30S ribosomal subunits (but not with 30S subunits that are part of 70S ribosomes or polysomes). Required for efficient processing of 16S rRNA. May interact with the 5'-terminal helix region of 16S rRNA. In Cereibacter sphaeroides (strain KD131 / KCTC 12085) (Rhodobacter sphaeroides), this protein is Ribosome-binding factor A.